An 845-amino-acid chain; its full sequence is BLOC-2 complex member HPS5 homolog (845 aa).

Residues 239 to 268 (PTEEDLEDAKSMEGSDDNDNDQRSSPSGVK) are disordered.

Belongs to the HPS5 family.

Has a role in the biogenesis of eye pigment granules. Eye pigment granules are specialized forms of late endosomes or lysosomes. Biogenesis of pigment granules in the eye requires molecular components required for protein delivery to lysosomes. This Aedes aegypti (Yellowfever mosquito) protein is BLOC-2 complex member HPS5 homolog.